Reading from the N-terminus, the 213-residue chain is Large ribosomal subunit protein uL18c (213 aa).

It belongs to the universal ribosomal protein uL18 family.

It is found in the plastid. The protein localises to the apicoplast. This is Large ribosomal subunit protein uL18c (RPL18) from Plasmodium falciparum (isolate 3D7).